The primary structure comprises 322 residues: Homoserine kinase (322 aa).

It belongs to the pseudomonas-type ThrB family.

It carries out the reaction L-homoserine + ATP = O-phospho-L-homoserine + ADP + H(+). It participates in amino-acid biosynthesis; L-threonine biosynthesis; L-threonine from L-aspartate: step 4/5. In Agrobacterium fabrum (strain C58 / ATCC 33970) (Agrobacterium tumefaciens (strain C58)), this protein is Homoserine kinase.